Here is a 358-residue protein sequence, read N- to C-terminus: E3 ubiquitin-protein ligase RFI2 (358 aa).

Residues 1 to 34 are disordered; sequence MAGAKDSGCDDDLRIAGGCDPGKRGNPEDSSSPV. The RING-type; atypical zinc finger occupies 38-83; that stretch reads CSICLESVLDDGTRSKAKLQCGHQFHLDCIGSAFNMKGAMQCPNCR. Disordered stretches follow at residues 174-201 and 248-313; these read GPAATPRTSDNNSTDDHPWNSHSNDHFH and SNQR…DQNV. The segment covering 187 to 201 has biased composition (basic and acidic residues); it reads TDDHPWNSHSNDHFH. Positions 248-266 are enriched in polar residues; sequence SNQRSSPAINSYQGSSTQM. Pro residues predominate over residues 299–309; the sequence is LPPPPPPPPMP.

It localises to the nucleus. It catalyses the reaction S-ubiquitinyl-[E2 ubiquitin-conjugating enzyme]-L-cysteine + [acceptor protein]-L-lysine = [E2 ubiquitin-conjugating enzyme]-L-cysteine + N(6)-ubiquitinyl-[acceptor protein]-L-lysine.. The protein operates within protein modification; protein ubiquitination. Functionally, mediates phytochrome (phyA and phyB)-controlled seedling deetiolation responses such as hypocotyl elongation in response to red and far-red light. Required for light-induced expression of LHCB3 and CHALCONE SYNTHASE (CHS). Negatively regulates CONSTANS (CO) and FLOWERING LOCUS T (FT) expression and photoperiodic flowering. The protein is E3 ubiquitin-protein ligase RFI2 of Arabidopsis thaliana (Mouse-ear cress).